The chain runs to 353 residues: Protein MGF 360-13L (353 aa).

The protein belongs to the asfivirus MGF 360 family.

Functionally, plays a role in virus cell tropism, and may be required for efficient virus replication in macrophages. In African swine fever virus (isolate Pig/Kenya/KEN-50/1950) (ASFV), this protein is Protein MGF 360-13L.